The chain runs to 205 residues: Probable GTP-binding protein EngB (205 aa).

Residues 22–195 enclose the EngB-type G domain; it reads NLPEVALVGR…LDLLDYFWNG (174 aa). Residues 30-37, 57-61, 75-78, 142-145, and 174-176 each bind GTP; these read GRSNVGKS, GKTQT, DLPG, TKAD, and FSA. Ser37 and Thr59 together coordinate Mg(2+).

It belongs to the TRAFAC class TrmE-Era-EngA-EngB-Septin-like GTPase superfamily. EngB GTPase family. Mg(2+) is required as a cofactor.

Functionally, necessary for normal cell division and for the maintenance of normal septation. In Heliobacterium modesticaldum (strain ATCC 51547 / Ice1), this protein is Probable GTP-binding protein EngB.